We begin with the raw amino-acid sequence, 545 residues long: Membrane protein insertase YidC (545 aa).

The next 4 helical transmembrane spans lie at 350-370 (IIGN…AVLY), 424-444 (LPML…FASV), 461-481 (ADPY…QTYL), and 498-518 (PLVF…YWVV).

The protein belongs to the OXA1/ALB3/YidC family. Type 1 subfamily. In terms of assembly, interacts with the Sec translocase complex via SecD. Specifically interacts with transmembrane segments of nascent integral membrane proteins during membrane integration.

It is found in the cell inner membrane. In terms of biological role, required for the insertion and/or proper folding and/or complex formation of integral membrane proteins into the membrane. Involved in integration of membrane proteins that insert both dependently and independently of the Sec translocase complex, as well as at least some lipoproteins. Aids folding of multispanning membrane proteins. In Neisseria meningitidis serogroup B (strain ATCC BAA-335 / MC58), this protein is Membrane protein insertase YidC.